The primary structure comprises 472 residues: Eukaryotic translation initiation factor 2 subunit 3 (472 aa).

A tr-type G domain is found at 39-247; that stretch reads QATINIGTIG…YIVNKIPVPV (209 aa). Residues 48 to 55 are G1; it reads GHVAHGKS. A GTP-binding site is contributed by 51-56; sequence AHGKST. The G2 stretch occupies residues 76-80; that stretch reads NITIK. The tract at residues 134-137 is G3; sequence DCPG. Residues 190 to 193 and 225 to 227 each bind GTP; these read NKID and SAQ. A G4 region spans residues 190 to 193; it reads NKID. A G5 region spans residues 225–227; the sequence is SAQ. An interacts with cdc123 region spans residues 457 to 469; that stretch reads GQIRRGVTITPTV.

It belongs to the TRAFAC class translation factor GTPase superfamily. Classic translation factor GTPase family. EIF2G subfamily. Eukaryotic translation initiation factor 2 eIF2 is a heterotrimeric complex composed of an alpha (EIF2S1), a beta (EIF2S2) and a gamma (EIF2S3) chain. eIF2 is member of the 43S pre-initiation complex (43S PIC).

It localises to the cytoplasm. It is found in the cytosol. The enzyme catalyses GTP + H2O = GDP + phosphate + H(+). Member of the eIF2 complex that functions in the early steps of protein synthesis by forming a ternary complex with GTP and initiator tRNA. This complex binds to a 40S ribosomal subunit, followed by mRNA binding to form the 43S pre-initiation complex (43S PIC). Junction of the 60S ribosomal subunit to form the 80S initiation complex is preceded by hydrolysis of the GTP bound to eIF2 and release of an eIF2-GDP binary complex. In order for eIF2 to recycle and catalyze another round of initiation, the GDP bound to eIF2 must exchange with GTP by way of a reaction catalyzed by eIF-2B. This Danio rerio (Zebrafish) protein is Eukaryotic translation initiation factor 2 subunit 3.